The following is a 610-amino-acid chain: Glutamine--fructose-6-phosphate aminotransferase [isomerizing] (610 aa).

The active-site Nucleophile; for GATase activity is the Cys2. The region spanning 2–219 is the Glutamine amidotransferase type-2 domain; that stretch reads CGIVGATSER…EGDVADINRT (218 aa). 2 SIS domains span residues 287–427 and 459–600; these read AADI…YRGM and LAQD…VDQP. The active-site For Fru-6P isomerization activity is Lys605.

In terms of assembly, homodimer.

The protein localises to the cytoplasm. The enzyme catalyses D-fructose 6-phosphate + L-glutamine = D-glucosamine 6-phosphate + L-glutamate. Its function is as follows. Catalyzes the first step in hexosamine metabolism, converting fructose-6P into glucosamine-6P using glutamine as a nitrogen source. The polypeptide is Glutamine--fructose-6-phosphate aminotransferase [isomerizing] (Idiomarina loihiensis (strain ATCC BAA-735 / DSM 15497 / L2-TR)).